Consider the following 397-residue polypeptide: MSETSEQMEETVQSGNEPISKSTWMGFIKNLATFTGDLSTLSAPSFILSGTSLLEYMSYWFEFPELFVTIVDFPTPKERMLAVLKWYITGLSREYASRNKNYGTEKKPLNPILGELFYGSWDSSKGKVELTAEQVSHHGPESAAHVVCKEAGITVDTHNKYRSGFSGRTVYVNQLGQLRVHLEKYNETYYITLPNISLEGLWFMAPYIELYGSTYIVSNTNYITKIDYSGRGYFRGTKNSFKATIFEKNEDPDYIVEGVWTGESKLTIPSLKSTIFFLSIPSLEATPITVKPESEMGDWESRNVWKEVSAALASGNYDIVSSKKSTIEQSQRDMRKKEEAEGAVWARRYFKWEEHDSDARNALAQAVLEVIEPGFWIYIGDTHPSLPAGEQPVKRME.

N-linked (GlcNAc...) asparagine glycosylation is found at N186 and N195.

The protein belongs to the OSBP family.

The protein localises to the endoplasmic reticulum. This chain is Oxysterol-binding protein homolog C354.07c, found in Schizosaccharomyces pombe (strain 972 / ATCC 24843) (Fission yeast).